We begin with the raw amino-acid sequence, 398 residues long: Cell division protein FtsZ (398 aa).

Residues 24–28, 111–113, glutamate 154, arginine 158, and aspartate 202 each bind GTP; these read GAGGN and GTG. Residues 333 to 381 are disordered; that stretch reads GRNNKSETSPISQSEDSEKEKFKWPYSQSESTQDKTLETKPAEQVSEGA. The segment covering 364-373 has biased composition (basic and acidic residues); it reads TQDKTLETKP.

This sequence belongs to the FtsZ family. In terms of assembly, homodimer. Polymerizes to form a dynamic ring structure in a strictly GTP-dependent manner. Interacts directly with several other division proteins.

It is found in the cytoplasm. In terms of biological role, essential cell division protein that forms a contractile ring structure (Z ring) at the future cell division site. The regulation of the ring assembly controls the timing and the location of cell division. One of the functions of the FtsZ ring is to recruit other cell division proteins to the septum to produce a new cell wall between the dividing cells. Binds GTP and shows GTPase activity. The polypeptide is Cell division protein FtsZ (Wolbachia sp).